The following is a 511-amino-acid chain: Probable eukaryotic translation initiation factor 4H (511 aa).

Disordered stretches follow at residues 25-63 (SWAD…DRGS) and 154-511 (TIRV…EVKI). A compositionally biased stretch (basic and acidic residues) spans 39 to 51 (AREESGSGLKRGD). In terms of domain architecture, RRM spans 86-162 (FTAFIGNLSF…RTIRVNVAEA (77 aa)). Over residues 179 to 196 (WRRSTPLASRESSSQPSR) the composition is skewed to polar residues. Basic and acidic residues-rich tracts occupy residues 230 to 247 (VRRD…RDPG) and 261 to 270 (LAEKVDRDVP). Polar residues predominate over residues 285-318 (LADTEQTWSRGTKLRTPTTTSRQSSADSTPSSGA). Residues 331 to 349 (TAGSPSATANATPAAPASG) are compositionally biased toward low complexity. Position 334 is a phosphoserine (S334). Composition is skewed to basic and acidic residues over residues 360–388 (AARE…EKQK) and 394–419 (KPVE…DKVA). Residues 420–434 (GKPTTAPATTTNTGA) are compositionally biased toward low complexity. Residues 438–448 (GSADRAKKDEQ) show a composition bias toward basic and acidic residues. Residues 451–467 (EQVQPSRKSSQTGATSE) are compositionally biased toward polar residues. Over residues 502-511 (VTKGVEEVKI) the composition is skewed to basic and acidic residues.

It is found in the cytoplasm. It localises to the P-body. In terms of biological role, probable translation initiation factor. In Cryptococcus neoformans var. grubii serotype A (strain H99 / ATCC 208821 / CBS 10515 / FGSC 9487) (Filobasidiella neoformans var. grubii), this protein is Probable eukaryotic translation initiation factor 4H.